A 149-amino-acid polypeptide reads, in one-letter code: YbbR-like domain-containing protein in def 5'region (149 aa).

The region spanning Ile1–Glu68 is the YbbR-like domain.

In Thermus thermophilus, this protein is YbbR-like domain-containing protein in def 5'region.